A 114-amino-acid polypeptide reads, in one-letter code: Progonadoliberin-2 (114 aa).

The N-terminal stretch at 1–24 (MASSRRGLLLLLMLLTAHPGPSEA) is a signal peptide. The residue at position 34 (G34) is a Glycine amide. The interval 35–59 (GKRALSSAQDPQNALRPPAGSPAQA) is disordered.

Belongs to the GnRH family.

It is found in the secreted. Functionally, stimulates the secretion of gonadotropins; it stimulates the secretion of both luteinizing and follicle-stimulating hormones. In Macaca mulatta (Rhesus macaque), this protein is Progonadoliberin-2 (GNRH2).